A 385-amino-acid polypeptide reads, in one-letter code: Rhomboid domain-containing protein 3 (385 aa).

5 consecutive transmembrane segments (helical) span residues Ala-13–Ala-33, Leu-58–Trp-78, Val-95–Ala-115, Trp-146–Leu-166, and Leu-168–Leu-188. A disordered region spans residues Pro-238–Gln-264. Residues Ser-322–Gly-361 form the UBA domain.

Its subcellular location is the membrane. The sequence is that of Rhomboid domain-containing protein 3 (Rhbdd3) from Mus musculus (Mouse).